Reading from the N-terminus, the 115-residue chain is Alpha-endosulfine (115 aa).

Residues 1–10 (MSSENLSDTQ) are compositionally biased toward polar residues. Residues 1–27 (MSSENLSDTQMEYEDEKQDSQEKNANL) form a disordered region. Ser-65 bears the Phosphoserine; by GWL mark. Residues 77-115 (NKQLPVAGPDKNLVTGDHIPTPQDLPQRRSSLVTSKLAG) form a disordered region. Residues 104–115 (RRSSLVTSKLAG) are compositionally biased toward polar residues.

The protein belongs to the endosulfine family. Post-translationally, phosphorylation at Ser-65 by gwl during mitosis is essential for interaction with ppp2r2d (PR55-delta) and subsequent inactivation of PP2A.

It localises to the cytoplasm. Protein phosphatase inhibitor that specifically inhibits protein phosphatase 2A (PP2A) during mitosis. When phosphorylated at Ser-67 during mitosis, specifically interacts with ppp2r2d (PR55-delta) and inhibits its activity, leading to inactivation of PP2A, an essential condition to keep cyclin-B1-CDK1 activity high during M phase. In Salmo salar (Atlantic salmon), this protein is Alpha-endosulfine (ensa).